Here is a 506-residue protein sequence, read N- to C-terminus: L-amino-acid oxidase (506 aa).

Positions 1 to 18 (MNVFFTFSLLFLAALGSC) are cleaved as a signal peptide. Cysteine 28 and cysteine 191 form a disulfide bridge. Glutamate 36 contributes to the Zn(2+) binding site. FAD contacts are provided by residues 61–62 (MS), serine 62, 81–82 (EA), arginine 89, and 105–108 (GPMR). Position 108 (arginine 108) interacts with substrate. Zn(2+)-binding residues include glutamate 111, glutamate 118, and glutamate 150. Asparagine 190 carries N-linked (GlcNAc...) asparagine glycosylation. Aspartate 219 provides a ligand contact to Zn(2+). Histidine 241 contacts substrate. Residue glutamate 248 participates in Zn(2+) binding. An FAD-binding site is contributed by valine 279. Zn(2+) contacts are provided by glutamate 299 and histidine 332. Cysteines 349 and 430 form a disulfide. Tyrosine 390 is a substrate binding site. Histidine 458 lines the Zn(2+) pocket. Residues glutamate 475 and 482–487 (GWIDST) each bind FAD. 482-483 (GW) provides a ligand contact to substrate.

Belongs to the flavin monoamine oxidase family. FIG1 subfamily. In terms of assembly, homodimer; non-covalently linked. Stabilized by a single zinc-binding site located at the dimer interface (Asp-219, His-332 and His-458). Other zinc-bind sites can be understood as transient and non-specific, and appear due to the high concentration of zinc ions used in the crystallization experiments. Requires FAD as cofactor. In terms of tissue distribution, expressed by the venom gland.

Its subcellular location is the secreted. It catalyses the reaction an L-alpha-amino acid + O2 + H2O = a 2-oxocarboxylate + H2O2 + NH4(+). The enzyme catalyses L-leucine + O2 + H2O = 4-methyl-2-oxopentanoate + H2O2 + NH4(+). It carries out the reaction L-phenylalanine + O2 + H2O = 3-phenylpyruvate + H2O2 + NH4(+). The catalysed reaction is L-tryptophan + O2 + H2O = indole-3-pyruvate + H2O2 + NH4(+). It catalyses the reaction L-methionine + O2 + H2O = 4-methylsulfanyl-2-oxobutanoate + H2O2 + NH4(+). The enzyme catalyses L-isoleucine + O2 + H2O = (S)-3-methyl-2-oxopentanoate + H2O2 + NH4(+). It carries out the reaction L-tyrosine + O2 + H2O = 3-(4-hydroxyphenyl)pyruvate + H2O2 + NH4(+). Catalyzes an oxidative deamination of predominantly hydrophobic and aromatic L-amino acids, thus producing hydrogen peroxide that may contribute to the diverse toxic effects of this enzyme. Shows high catalytic activity against L-Met, L-Leu, L-Phe, L-Trp, L-Tyr, L-Ile. Shows no or weak activity on L-Cys, L-Val, L-Gln, L-Thr, L-Ser, L-Lys, L-Arg, L-Asn, L-Glu, L-Gly, L-Pro, L-Asp and L-His. Induces platelet aggregation in platelet-rich plasma, probably due to hydrogen peroxide production, since catalase inhibits aggregation effect. Induces moderate mouse paw edema. Induces apoptosis and shows cytotoxicity against several cancer cell lines, which is inhibited by catalase. Shows hemolytic activity and antibacterial activities against both Gram-positive and Gram-negative bacteria. Has parasiticidal activities against both trypanosomes and leishmania, as a result of enzyme-catalyzed hydrogen peroxide production. Unlike other snake venom L-amino acid oxidases, does not induce hemorrhage (with 50 ug of enzyme). This Bothrops atrox (Barba amarilla) protein is L-amino-acid oxidase.